Reading from the N-terminus, the 196-residue chain is 7-methyl-GTP pyrophosphatase (196 aa).

The active-site Proton acceptor is Asp-69.

It belongs to the Maf family. YceF subfamily. It depends on a divalent metal cation as a cofactor.

The protein resides in the cytoplasm. The enzyme catalyses N(7)-methyl-GTP + H2O = N(7)-methyl-GMP + diphosphate + H(+). Functionally, nucleoside triphosphate pyrophosphatase that hydrolyzes 7-methyl-GTP (m(7)GTP). May have a dual role in cell division arrest and in preventing the incorporation of modified nucleotides into cellular nucleic acids. This Photorhabdus laumondii subsp. laumondii (strain DSM 15139 / CIP 105565 / TT01) (Photorhabdus luminescens subsp. laumondii) protein is 7-methyl-GTP pyrophosphatase.